The primary structure comprises 257 residues: Flap endonuclease Xni (257 aa).

Mg(2+) is bound at residue aspartate 112. The region spanning 169-256 is the 5'-3' exonuclease domain; it reads EQKKLVEFWA…LGFSLKQLRL (88 aa). Residues phenylalanine 179, alanine 180, proline 188, valine 190, and isoleucine 193 each contribute to the K(+) site. The interval 192 to 197 is interaction with DNA; that stretch reads GIGTKS.

It belongs to the Xni family. The cofactor is Mg(2+). Requires K(+) as cofactor.

Functionally, has flap endonuclease activity. During DNA replication, flap endonucleases cleave the 5'-overhanging flap structure that is generated by displacement synthesis when DNA polymerase encounters the 5'-end of a downstream Okazaki fragment. This Pseudoalteromonas translucida (strain TAC 125) protein is Flap endonuclease Xni.